Reading from the N-terminus, the 3351-residue chain is Apolipophorins (3351 aa).

A signal peptide spans 1 to 25 (MARMKYNIALIGILASVLLTIAVNA). The Vitellogenin domain occupies 43–641 (YIPGNYYDYS…SQHGFLPRSS (599 aa)). N-linked (GlcNAc...) asparagine glycosylation is found at N67, N644, N1514, N1744, N1932, N1979, and N2822. The 167-residue stretch at 2786–2952 (LRGHVVDGKH…DYGVGKCTAI (167 aa)) folds into the VWFD domain.

In terms of assembly, interacts with Nrx-1 (via cytoplasmic domain); the interaction supports apolpp/ApoLI protein stability. Post-translationally, may be modified covalently by lipidation. Cleaved into 2 chains by furin protease. However, prevention of cleavage does not impair its function. During stage 12, it is highly present throughout the yolk sac. By late stage 14, it localizes in the lateral fat body cells. Starting at stage 14, it localizes to the apodemes. Component of hemolymph clots (at protein level). Expressed in the amniosera. Expressed in rhabdomere of photoreceptor cells in retina (at protein level). As to expression, expressed in rhabdomere of photoreceptor cells in retina (at protein level). In terms of tissue distribution, expressed in simper cells as well as interphotoreceptor matrix (at protein level).

It localises to the secreted. The protein resides in the cell projection. It is found in the rhabdomere. Its function is as follows. Constitutes the major component of lipophorin, which mediates transport for various types of lipids in hemolymph. Acts by forming lipoprotein particles that bind lipoproteins and lipids. Also involved in the transport of hydrophobic ligands like juvenile hormones, pheromone hydrocarbons and carotenoids. Required for morphogens wingless (wg) and hedgehog (hh) function, probably by acting as vehicles for the movement of wg and hh, explaining how covalently lipidated wg and hh can spread over long distances. May also be involved in transport and/or metabolism of heme. Involved in yolk granule formation. May be a component of yolk incorporated into yolk granules via yl/yolkless-mediated endocytosis and the endolysosomal pathway. This is Apolipophorins from Drosophila melanogaster (Fruit fly).